Here is a 301-residue protein sequence, read N- to C-terminus: MSNTDLEELRRGTDLVKRGFAKMQKGGVIMDVVTREQARIAEDAGAVAVMHLESVPADIRKRGGVARMADPGGLEDVIDEVSIPVMGKARIGHTAEAQILEATGADMIDESEVLTQADDRYHIDKREFTAPFVCGARNLGEALRRIDEGAAMIRTKGEAGTGDVNQAVTHQRNIQRSIRKLSGMDYEERDEWAREHGAPRELVHETAEMGRLPVVNFAAGGIATPADAALMMQLGCDGIFVGSGIFGAENPQAMGEAVVAAVNNYDDPETLKEIAKSPGKGMKGQANETLPEEEKLQDRGI.

A D-ribose 5-phosphate-binding site is contributed by aspartate 31. The active-site Schiff-base intermediate with D-ribose 5-phosphate is the lysine 88. Glycine 160 lines the D-ribose 5-phosphate pocket. Arginine 172 contributes to the D-glyceraldehyde 3-phosphate binding site. Residues glycine 221 and glycine 242–serine 243 each bind D-ribose 5-phosphate. A disordered region spans residues glutamate 273 to isoleucine 301. Residues glutamate 292 to isoleucine 301 show a composition bias toward basic and acidic residues.

This sequence belongs to the PdxS/SNZ family. In the presence of PdxT, forms a dodecamer of heterodimers.

It catalyses the reaction aldehydo-D-ribose 5-phosphate + D-glyceraldehyde 3-phosphate + L-glutamine = pyridoxal 5'-phosphate + L-glutamate + phosphate + 3 H2O + H(+). The protein operates within cofactor biosynthesis; pyridoxal 5'-phosphate biosynthesis. Its function is as follows. Catalyzes the formation of pyridoxal 5'-phosphate from ribose 5-phosphate (RBP), glyceraldehyde 3-phosphate (G3P) and ammonia. The ammonia is provided by the PdxT subunit. Can also use ribulose 5-phosphate and dihydroxyacetone phosphate as substrates, resulting from enzyme-catalyzed isomerization of RBP and G3P, respectively. This chain is Pyridoxal 5'-phosphate synthase subunit PdxS, found in Natronomonas pharaonis (strain ATCC 35678 / DSM 2160 / CIP 103997 / JCM 8858 / NBRC 14720 / NCIMB 2260 / Gabara) (Halobacterium pharaonis).